A 237-amino-acid polypeptide reads, in one-letter code: Transcriptional regulatory protein YvrH (237 aa).

Residues 5–119 (SILIVDDEKA…ELAARIRAHL (115 aa)) form the Response regulatory domain. Residue Asp55 is modified to 4-aspartylphosphate. A DNA-binding region (ompR/PhoB-type) is located at residues 131-230 (NQTYTYDYFT…VRGLGYRFIP (100 aa)).

Phosphorylated by YvrG.

It localises to the cytoplasm. Functionally, member of the two-component regulatory system YvrG/YvrH that positively regulates 7 transcriptional units (wprA, wapA-yxxG, dltABCDE, sunA, sunT-bdbA-yolJ-bdbB, sigO-rsoA, and sigX-rsiX), and negatively regulates the lytABC operon. The protein is Transcriptional regulatory protein YvrH (yvrH) of Bacillus subtilis (strain 168).